We begin with the raw amino-acid sequence, 144 residues long: MLMPKRVKYRKQQRGRIKGNATRGNTLTYGEYGLQALEPGWITATQIEAARVAMTRFIKRGGKVWIKIFPDKPVTKKPAETRMGSGKGSPEFWVAVVKPGRVLFEIAGVSEEVAKEALRLAMHKLPIKTKFLKREELGGEDNES.

This sequence belongs to the universal ribosomal protein uL16 family. In terms of assembly, part of the 50S ribosomal subunit.

Functionally, binds 23S rRNA and is also seen to make contacts with the A and possibly P site tRNAs. The polypeptide is Large ribosomal subunit protein uL16 (Thermoanaerobacter sp. (strain X514)).